Reading from the N-terminus, the 465-residue chain is A-type ATP synthase subunit B (465 aa).

It belongs to the ATPase alpha/beta chains family. As to quaternary structure, has multiple subunits with at least A(3), B(3), C, D, E, F, H, I and proteolipid K(x).

It localises to the cell membrane. Functionally, component of the A-type ATP synthase that produces ATP from ADP in the presence of a proton gradient across the membrane. The B chain is a regulatory subunit. The chain is A-type ATP synthase subunit B from Pyrococcus horikoshii (strain ATCC 700860 / DSM 12428 / JCM 9974 / NBRC 100139 / OT-3).